Reading from the N-terminus, the 445-residue chain is 3-phosphoshikimate 1-carboxyvinyltransferase (445 aa).

3 residues coordinate 3-phosphoshikimate: Lys-34, Ser-35, and Arg-39. A phosphoenolpyruvate-binding site is contributed by Lys-34. Phosphoenolpyruvate is bound by residues Gly-112 and Arg-140. 3-phosphoshikimate contacts are provided by Ser-186, Ser-187, Gln-188, Ser-216, Glu-331, and His-358. Gln-188 is a binding site for phosphoenolpyruvate. Glu-331 serves as the catalytic Proton acceptor. Residues Arg-362, Arg-403, and Lys-428 each contribute to the phosphoenolpyruvate site.

This sequence belongs to the EPSP synthase family. Monomer.

Its subcellular location is the cytoplasm. It catalyses the reaction 3-phosphoshikimate + phosphoenolpyruvate = 5-O-(1-carboxyvinyl)-3-phosphoshikimate + phosphate. The protein operates within metabolic intermediate biosynthesis; chorismate biosynthesis; chorismate from D-erythrose 4-phosphate and phosphoenolpyruvate: step 6/7. Functionally, catalyzes the transfer of the enolpyruvyl moiety of phosphoenolpyruvate (PEP) to the 5-hydroxyl of shikimate-3-phosphate (S3P) to produce enolpyruvyl shikimate-3-phosphate and inorganic phosphate. The polypeptide is 3-phosphoshikimate 1-carboxyvinyltransferase (Kocuria rhizophila (strain ATCC 9341 / DSM 348 / NBRC 103217 / DC2201)).